The chain runs to 602 residues: Glutamyl-tRNA(Gln) amidotransferase subunit B, mitochondrial (602 aa).

The transit peptide at 1-52 (MLQQWLRQSPAAAGLLRCSRYRGPQAALLQLSPQRAPTYHAIRSLQTSAAES) directs the protein to the mitochondrion. Residues 61–83 (QLKQGAKGLKAQKRQRRESEEAS) form a disordered region.

Belongs to the GatB/GatE family. GatB subfamily. As to quaternary structure, subunit of the heterotrimeric GatCAB amidotransferase (AdT) complex, composed of A, B and C subunits.

Its subcellular location is the mitochondrion. The catalysed reaction is L-glutamyl-tRNA(Gln) + L-glutamine + ATP + H2O = L-glutaminyl-tRNA(Gln) + L-glutamate + ADP + phosphate + H(+). Functionally, allows the formation of correctly charged Gln-tRNA(Gln) through the transamidation of misacylated Glu-tRNA(Gln) in the mitochondria. The reaction takes place in the presence of glutamine and ATP through an activated gamma-phospho-Glu-tRNA(Gln). The protein is Glutamyl-tRNA(Gln) amidotransferase subunit B, mitochondrial of Aspergillus clavatus (strain ATCC 1007 / CBS 513.65 / DSM 816 / NCTC 3887 / NRRL 1 / QM 1276 / 107).